We begin with the raw amino-acid sequence, 77 residues long: uncharacterized protein (77 aa).

The protein resides in the plastid. Its subcellular location is the cyanelle. This is an uncharacterized protein from Cyanophora paradoxa.